The chain runs to 212 residues: Thymidylate kinase (212 aa).

11–18 (GPEGAGKT) serves as a coordination point for ATP.

The protein belongs to the thymidylate kinase family.

The enzyme catalyses dTMP + ATP = dTDP + ADP. Its function is as follows. Phosphorylation of dTMP to form dTDP in both de novo and salvage pathways of dTTP synthesis. In Streptococcus pneumoniae (strain Hungary19A-6), this protein is Thymidylate kinase.